Consider the following 101-residue polypeptide: Urease subunit beta (101 aa).

The protein belongs to the urease beta subunit family. Heterotrimer of UreA (gamma), UreB (beta) and UreC (alpha) subunits. Three heterotrimers associate to form the active enzyme.

It is found in the cytoplasm. It catalyses the reaction urea + 2 H2O + H(+) = hydrogencarbonate + 2 NH4(+). The protein operates within nitrogen metabolism; urea degradation; CO(2) and NH(3) from urea (urease route): step 1/1. This chain is Urease subunit beta, found in Hahella chejuensis (strain KCTC 2396).